We begin with the raw amino-acid sequence, 488 residues long: Rhamnulokinase (488 aa).

Ala-13–Arg-17 provides a ligand contact to ATP. A disulfide bridge links Cys-68 with Cys-222. Residues Gly-83 and His-236–Thr-238 each bind substrate. The Proton acceptor role is filled by Asp-237. An ATP-binding site is contributed by Thr-259. Asn-296 lines the substrate pocket. An ATP-binding site is contributed by Gln-304. Residues Cys-353 and Cys-370 are joined by a disulfide bond. Gly-402 contacts ATP. An intrachain disulfide couples Cys-413 to Cys-417.

Belongs to the rhamnulokinase family. Mg(2+) is required as a cofactor.

It carries out the reaction L-rhamnulose + ATP = L-rhamnulose 1-phosphate + ADP + H(+). It functions in the pathway carbohydrate degradation; L-rhamnose degradation; glycerone phosphate from L-rhamnose: step 2/3. Functionally, involved in the catabolism of L-rhamnose (6-deoxy-L-mannose). Catalyzes the transfer of the gamma-phosphate group from ATP to the 1-hydroxyl group of L-rhamnulose to yield L-rhamnulose 1-phosphate. The protein is Rhamnulokinase of Klebsiella pneumoniae (strain 342).